The sequence spans 1020 residues: X-linked retinitis pigmentosa GTPase regulator (1020 aa).

RCC1 repeat units follow at residues 54-105, 106-158, 159-208, 209-261, 262-313, and 314-367; these read NKLY…STEG, GNVY…LTED, GRLF…VTTD, GELY…LTEN, AVYT…ITDI, and GLMY…FAAP. 2 positions are modified to phosphoserine: S418 and S518. Disordered regions lie at residues 609–776, 790–906, and 989–1020; these read HENN…IISK, EIPE…KEKA, and DNKD…CTIL. Composition is skewed to basic and acidic residues over residues 618–636, 644–665, 685–698, 704–715, 760–771, 790–802, 816–853, and 883–906; these read LDAK…QKES, EKET…EKST, EENK…ESCK, DSERESVEKPDS, KLIEQGNEKETK, EIPE…EDSK, ENVK…LKLE, and SKTE…KEKA. The segment covering 996-1009 has biased composition (polar residues); sequence NHMSQNHQNIPPTN. The residue at position 1017 (C1017) is a Cysteine methyl ester. Residue C1017 is the site of S-geranylgeranyl cysteine attachment. The propeptide at 1018-1020 is removed in mature form; the sequence is TIL.

Interacts with SPATA7. Interacts with CEP290. Interacts with WHRN. Interacts with PDE6D. Interacts with RPGRIP1. Interacts with RPGRIP1L. PDE6D, RPGRIP1 and RPGRIP1L may compete for the same binding sites. Interacts with RAB37 and RAB8A (in GDP-bound forms); functions as GEF for RAB37 and RAB8A. As to quaternary structure, isoform 6 interacts with NPM1 (via C-terminus). Isoform 6 interacts with SMC1A and SMC3. Prenylated. In terms of tissue distribution, heart, brain, placenta, lung, liver, muscle, kidney, retina, pancreas and fetal retinal pigment epithelium. Isoform 3 is found only in the retina. Colocalizes with RPGRIP1 in the outer segment of rod photoreceptors and cone outer segments.

The protein localises to the cytoplasm. It is found in the cytoskeleton. The protein resides in the flagellum axoneme. Its subcellular location is the golgi apparatus. It localises to the cell projection. The protein localises to the cilium. It is found in the microtubule organizing center. The protein resides in the centrosome. Its subcellular location is the cilium basal body. It localises to the cilium axoneme. Acts as a guanine-nucleotide releasing factor (GEF) for RAB8A and RAB37 by promoting the conversion of inactive RAB-GDP to the active form RAB-GTP. GEF activity towards RAB8A may facilitate ciliary trafficking by modulating ciliary intracellular localization of RAB8A. GEF activity towards RAB37 maintains autophagic homeostasis and retinal function. Involved in photoreceptor integrity. May control cilia formation by regulating actin stress filaments and cell contractility. May be involved in microtubule organization and regulation of transport in primary cilia. May play a critical role in spermatogenesis and in intraflagellar transport processes. The protein is X-linked retinitis pigmentosa GTPase regulator of Homo sapiens (Human).